A 315-amino-acid polypeptide reads, in one-letter code: Olfactory receptor 5M1 (315 aa).

Topologically, residues 1 to 25 (MFSPNHTIVTEFILLGLTDDPVLEK) are extracellular. N-linked (GlcNAc...) asparagine glycosylation occurs at asparagine 5. Residues 26–46 (ILFGVFLAIYLITLAGNLCMI) traverse the membrane as a helical segment. The Cytoplasmic portion of the chain corresponds to 47-54 (LLIRTNSH). The chain crosses the membrane as a helical span at residues 55 to 75 (LQTPMYFFLGHLSFVDICYSS). The Extracellular segment spans residues 76–99 (NVTPNMLHNFLSEQKTISYAGCFT). Cysteine 97 and cysteine 189 are joined by a disulfide. Residues 100–120 (QCLLFIALVITEFYILASMAL) traverse the membrane as a helical segment. Topologically, residues 121 to 139 (DRYVAICSPLHYSSRMSKN) are cytoplasmic. Residues 140–160 (ICVCLVTIPYMYGFLSGFSQS) traverse the membrane as a helical segment. The Extracellular portion of the chain corresponds to 161-196 (LLTFHLSFCGSLEINHFYCADPPLIMLACSDTRVKK). The helical transmembrane segment at 197–217 (MAMFVVAGFNLSSSLFIILLS) threads the bilayer. The Cytoplasmic segment spans residues 218 to 237 (YLFIFAAIFRIRSAEGRHKA). The helical transmembrane segment at 238-258 (FSTCASHLTIVTLFYGTLFCM) threads the bilayer. Residues 259–271 (YVRPPSEKSVEES) are Extracellular-facing. The chain crosses the membrane as a helical span at residues 272 to 292 (KITAVFYTFLSPMLNPLIYSL). At 293–315 (RNTDVILAMQQMIRGKSFHKIAV) the chain is on the cytoplasmic side.

It belongs to the G-protein coupled receptor 1 family.

Its subcellular location is the cell membrane. Its function is as follows. Odorant receptor. The chain is Olfactory receptor 5M1 (OR5M1) from Homo sapiens (Human).